Reading from the N-terminus, the 151-residue chain is Sperm surface protein Sp17 (151 aa).

Disordered regions lie at residues 56–115 (DPAE…EKEE) and 127–151 (GHIA…EENK). Basic and acidic residues predominate over residues 62–98 (SKVEDRFYNNHAFEEQEPPEKSDPKQEESQISGKEEE). In terms of domain architecture, IQ spans 114 to 143 (EEVAAVKIQAAFRGHIAREEAKKMKTNSLQ).

As to quaternary structure, homodimer. May interact with ROPN1. Testis and sperm specific.

It is found in the membrane. Its function is as follows. Sperm surface zona pellucida binding protein. Helps to bind spermatozoa to the zona pellucida with high affinity. Might function in binding zona pellucida and carbohydrates. The protein is Sperm surface protein Sp17 (SPA17) of Homo sapiens (Human).